We begin with the raw amino-acid sequence, 253 residues long: MPTIRGQSILIIGGSSGIGAAVAKYACGDGVKVSVASSNKGRVEKALKKIQALVPASEILGFTVDLSQYDLESRLEKLFKEVVDATGGPLDHVVMTAGTGNMVSLSEYTAKAFQESAPLHFIAPLMVGKVAPRFMNRHWKSSITFTSGAFGKKPAKGYCVIASAVGALDAATRALALELAPIRVNAVSPGPTVTEMFGPPSEALDKAVAAMGAQSLLGKLGRPEDVAEAYIYLMRDANTTGTIVDSNGGAFLQ.

NADP(+) is bound by residues Ser15, Ser16, Ile18, Ser38, Asn39, Arg42, Asp65, and Lys129. Ser147 acts as the Proton donor in catalysis. NADP(+) is bound at residue Thr194.

It belongs to the short-chain dehydrogenases/reductases (SDR) family.

The protein operates within mycotoxin biosynthesis. Functionally, short-chain dehydrogenase/reductase; part of the core atranone cluster (CAC) which products are predicted to catalyze most or all steps of mycotoxin atranone synthesis, starting from geranylgeranyl pyrophosphate (GGPP). The initial cyclization of GGPP to dolabellane is probably performed by the terpene cyclase ATR13. The Baeyer-Villiger oxidation near the end of the atranone synthesis, which converts atranones D and E to atranones F and G is predicted to be catalyzed by the monooxygenase ATR8. Of the CAC's other predicted gene products, the reducing PKS ATR6 might synthesize a polyketide chain. This polyketide is probably transferred onto the atranone backbone by the polyketide transferase ATR5. Other predicted CAC products include 4 oxygenases (ATR2, ATR3, ATR4, and ATR14), 3 short-chain reductases (ATR7, ATR9, and ATR10), and a methyltransferase (ATR12). These may all be involved in the various steps of atranone biosynthesis, although their specific roles must await experimental determination. The polypeptide is Short-chain dehydrogenase/reductase ATR9 (Stachybotrys chlorohalonatus (strain IBT 40285)).